Consider the following 265-residue polypeptide: NAD kinase (265 aa).

The active-site Proton acceptor is the D45. NAD(+) is bound by residues 45–46, 121–122, R147, D149, A184, and Q221; these read DG and NE.

Belongs to the NAD kinase family. A divalent metal cation is required as a cofactor.

Its subcellular location is the cytoplasm. It carries out the reaction NAD(+) + ATP = ADP + NADP(+) + H(+). In terms of biological role, involved in the regulation of the intracellular balance of NAD and NADP, and is a key enzyme in the biosynthesis of NADP. Catalyzes specifically the phosphorylation on 2'-hydroxyl of the adenosine moiety of NAD to yield NADP. This Leuconostoc citreum (strain KM20) protein is NAD kinase.